The primary structure comprises 407 residues: Multifunctional CCA protein (407 aa).

ATP is bound by residues Gly-8 and Arg-11. CTP contacts are provided by Gly-8 and Arg-11. Mg(2+) contacts are provided by Asp-21 and Asp-23. Arg-91, Arg-137, and Arg-140 together coordinate ATP. Arg-91, Arg-137, and Arg-140 together coordinate CTP. The 102-residue stretch at 228-329 folds into the HD domain; that stretch reads TGIHTLLVAE…VKIFNKLDVW (102 aa).

Belongs to the tRNA nucleotidyltransferase/poly(A) polymerase family. Bacterial CCA-adding enzyme type 1 subfamily. In terms of assembly, monomer. Can also form homodimers and oligomers. Mg(2+) is required as a cofactor. It depends on Ni(2+) as a cofactor.

The enzyme catalyses a tRNA precursor + 2 CTP + ATP = a tRNA with a 3' CCA end + 3 diphosphate. It catalyses the reaction a tRNA with a 3' CCA end + 2 CTP + ATP = a tRNA with a 3' CCACCA end + 3 diphosphate. Functionally, catalyzes the addition and repair of the essential 3'-terminal CCA sequence in tRNAs without using a nucleic acid template. Adds these three nucleotides in the order of C, C, and A to the tRNA nucleotide-73, using CTP and ATP as substrates and producing inorganic pyrophosphate. tRNA 3'-terminal CCA addition is required both for tRNA processing and repair. Also involved in tRNA surveillance by mediating tandem CCA addition to generate a CCACCA at the 3' terminus of unstable tRNAs. While stable tRNAs receive only 3'-terminal CCA, unstable tRNAs are marked with CCACCA and rapidly degraded. This Vibrio vulnificus (strain YJ016) protein is Multifunctional CCA protein.